The chain runs to 403 residues: Serine/threonine transporter SstT (403 aa).

Helical transmembrane passes span 16–36 (QIVI…AIAL), 45–65 (FVSA…MASI), 79–99 (ILWL…VASM), 138–158 (ALLN…GVAL), 175–195 (GVTL…FGLV), 214–234 (LAVL…LIVF), 295–315 (MAGA…TLGI), 327–347 (MVAA…LLLI), and 353–373 (LFGI…IIGV).

Belongs to the dicarboxylate/amino acid:cation symporter (DAACS) (TC 2.A.23) family.

The protein localises to the cell inner membrane. It carries out the reaction L-serine(in) + Na(+)(in) = L-serine(out) + Na(+)(out). It catalyses the reaction L-threonine(in) + Na(+)(in) = L-threonine(out) + Na(+)(out). Its function is as follows. Involved in the import of serine and threonine into the cell, with the concomitant import of sodium (symport system). The sequence is that of Serine/threonine transporter SstT from Pseudomonas putida (strain W619).